The chain runs to 358 residues: UDP-N-acetylglucosamine--N-acetylmuramyl-(pentapeptide) pyrophosphoryl-undecaprenol N-acetylglucosamine transferase (358 aa).

UDP-N-acetyl-alpha-D-glucosamine contacts are provided by S196 and Q287.

It belongs to the glycosyltransferase 28 family. MurG subfamily.

Its subcellular location is the cell membrane. It carries out the reaction Mur2Ac(oyl-L-Ala-gamma-D-Glu-L-Lys-D-Ala-D-Ala)-di-trans,octa-cis-undecaprenyl diphosphate + UDP-N-acetyl-alpha-D-glucosamine = beta-D-GlcNAc-(1-&gt;4)-Mur2Ac(oyl-L-Ala-gamma-D-Glu-L-Lys-D-Ala-D-Ala)-di-trans,octa-cis-undecaprenyl diphosphate + UDP + H(+). Its pathway is cell wall biogenesis; peptidoglycan biosynthesis. Functionally, cell wall formation. Catalyzes the transfer of a GlcNAc subunit on undecaprenyl-pyrophosphoryl-MurNAc-pentapeptide (lipid intermediate I) to form undecaprenyl-pyrophosphoryl-MurNAc-(pentapeptide)GlcNAc (lipid intermediate II). The chain is UDP-N-acetylglucosamine--N-acetylmuramyl-(pentapeptide) pyrophosphoryl-undecaprenol N-acetylglucosamine transferase from Streptococcus uberis (strain ATCC BAA-854 / 0140J).